The following is a 147-amino-acid chain: Ponticulin-like protein C3 (147 aa).

An N-terminal signal peptide occupies residues 1–20; the sequence is MKFTKSLLLLIVAVFASSNA. Asn-118 is lipidated: GPI-like-anchor amidated asparagine. Asn-118 carries an N-linked (GlcNAc...) asparagine glycan. A propeptide spans 119–147 (removed in mature form); the sequence is SSESDSSDSTRIGASFALFALALLSMLAL.

Belongs to the ponticulin family. In terms of processing, the GPI-like-anchor contains a phosphoceramide group, rather than a phosphatidyl group.

The protein resides in the cell membrane. This is Ponticulin-like protein C3 (ponC3) from Dictyostelium discoideum (Social amoeba).